We begin with the raw amino-acid sequence, 117 residues long: Large ribosomal subunit protein uL18 (117 aa).

Belongs to the universal ribosomal protein uL18 family. As to quaternary structure, part of the 50S ribosomal subunit; part of the 5S rRNA/L5/L18/L25 subcomplex. Contacts the 5S and 23S rRNAs.

Its function is as follows. This is one of the proteins that bind and probably mediate the attachment of the 5S RNA into the large ribosomal subunit, where it forms part of the central protuberance. This is Large ribosomal subunit protein uL18 from Blochmanniella floridana.